The primary structure comprises 68 residues: DNA-directed RNA polymerase subunit Rpo10 (68 aa).

Cys7, Cys10, Cys44, and Cys45 together coordinate Zn(2+).

This sequence belongs to the archaeal Rpo10/eukaryotic RPB10 RNA polymerase subunit family. As to quaternary structure, part of the RNA polymerase complex. Zn(2+) is required as a cofactor.

The protein localises to the cytoplasm. It catalyses the reaction RNA(n) + a ribonucleoside 5'-triphosphate = RNA(n+1) + diphosphate. Its function is as follows. DNA-dependent RNA polymerase (RNAP) catalyzes the transcription of DNA into RNA using the four ribonucleoside triphosphates as substrates. This chain is DNA-directed RNA polymerase subunit Rpo10, found in Methanococcus maripaludis (strain DSM 14266 / JCM 13030 / NBRC 101832 / S2 / LL).